Consider the following 617-residue polypeptide: Elongation factor 4 (617 aa).

The tr-type G domain occupies 17–198; sequence AIIRNFCIIA…KIVRDLPAPV (182 aa). Residues 29–34 and 145–148 contribute to the GTP site; these read DHGKST and NKID.

This sequence belongs to the TRAFAC class translation factor GTPase superfamily. Classic translation factor GTPase family. LepA subfamily.

The protein resides in the cell membrane. The catalysed reaction is GTP + H2O = GDP + phosphate + H(+). In terms of biological role, required for accurate and efficient protein synthesis under certain stress conditions. May act as a fidelity factor of the translation reaction, by catalyzing a one-codon backward translocation of tRNAs on improperly translocated ribosomes. Back-translocation proceeds from a post-translocation (POST) complex to a pre-translocation (PRE) complex, thus giving elongation factor G a second chance to translocate the tRNAs correctly. Binds to ribosomes in a GTP-dependent manner. The polypeptide is Elongation factor 4 (Arthrobacter sp. (strain FB24)).